We begin with the raw amino-acid sequence, 442 residues long: tRNA modification GTPase MnmE (442 aa).

(6S)-5-formyl-5,6,7,8-tetrahydrofolate-binding residues include arginine 21, glutamate 79, and lysine 118. The TrmE-type G domain occupies 214–367 (GFKIAIIGKP…LKEELQNYLN (154 aa)). Asparagine 224 serves as a coordination point for K(+). GTP-binding positions include 224 to 229 (NVGKSS), 243 to 249 (SDIAGTT), and 268 to 271 (DTAG). Serine 228 lines the Mg(2+) pocket. Residues serine 243, isoleucine 245, and threonine 248 each contribute to the K(+) site. A Mg(2+)-binding site is contributed by threonine 249. Lysine 442 serves as a coordination point for (6S)-5-formyl-5,6,7,8-tetrahydrofolate.

It belongs to the TRAFAC class TrmE-Era-EngA-EngB-Septin-like GTPase superfamily. TrmE GTPase family. As to quaternary structure, homodimer. Heterotetramer of two MnmE and two MnmG subunits. It depends on K(+) as a cofactor.

The protein resides in the cytoplasm. Its function is as follows. Exhibits a very high intrinsic GTPase hydrolysis rate. Involved in the addition of a carboxymethylaminomethyl (cmnm) group at the wobble position (U34) of certain tRNAs, forming tRNA-cmnm(5)s(2)U34. The chain is tRNA modification GTPase MnmE from Campylobacter jejuni subsp. doylei (strain ATCC BAA-1458 / RM4099 / 269.97).